The primary structure comprises 629 residues: tRNA uridine 5-carboxymethylaminomethyl modification enzyme MnmG (629 aa).

Residues 13–18, Val125, and Ser180 contribute to the FAD site; that span reads GGGHAG. Position 273–287 (273–287) interacts with NAD(+); sequence GPRYCPSIEDKIHRF. Gln370 contacts FAD.

The protein belongs to the MnmG family. As to quaternary structure, homodimer. Heterotetramer of two MnmE and two MnmG subunits. The cofactor is FAD.

The protein resides in the cytoplasm. Its function is as follows. NAD-binding protein involved in the addition of a carboxymethylaminomethyl (cmnm) group at the wobble position (U34) of certain tRNAs, forming tRNA-cmnm(5)s(2)U34. The polypeptide is tRNA uridine 5-carboxymethylaminomethyl modification enzyme MnmG (Shewanella oneidensis (strain ATCC 700550 / JCM 31522 / CIP 106686 / LMG 19005 / NCIMB 14063 / MR-1)).